The following is a 100-amino-acid chain: Large ribosomal subunit protein uL23 (100 aa).

This sequence belongs to the universal ribosomal protein uL23 family. In terms of assembly, part of the 50S ribosomal subunit. Contacts protein L29, and trigger factor when it is bound to the ribosome.

One of the early assembly proteins it binds 23S rRNA. One of the proteins that surrounds the polypeptide exit tunnel on the outside of the ribosome. Forms the main docking site for trigger factor binding to the ribosome. This chain is Large ribosomal subunit protein uL23, found in Mycobacterium marinum (strain ATCC BAA-535 / M).